The primary structure comprises 246 residues: tRNA pseudouridine synthase A (246 aa).

Aspartate 52 acts as the Nucleophile in catalysis. Tyrosine 112 is a substrate binding site.

Belongs to the tRNA pseudouridine synthase TruA family. Homodimer.

It catalyses the reaction uridine(38/39/40) in tRNA = pseudouridine(38/39/40) in tRNA. In terms of biological role, formation of pseudouridine at positions 38, 39 and 40 in the anticodon stem and loop of transfer RNAs. This chain is tRNA pseudouridine synthase A, found in Pelagibacter ubique (strain HTCC1062).